The following is a 272-amino-acid chain: GATA zinc finger domain-containing protein 1 (272 aa).

A GATA-type zinc finger spans residues cysteine 9 to cysteine 33. Positions threonine 67 to arginine 120 are disordered. Position 167 is an N6-acetyllysine (lysine 167). Lysine 265 participates in a covalent cross-link: Glycyl lysine isopeptide (Lys-Gly) (interchain with G-Cter in SUMO2).

The protein localises to the nucleus. In Bos taurus (Bovine), this protein is GATA zinc finger domain-containing protein 1 (GATAD1).